Here is a 507-residue protein sequence, read N- to C-terminus: ATP synthase subunit alpha, chloroplastic (507 aa).

Gly-170–Thr-177 is an ATP binding site.

It belongs to the ATPase alpha/beta chains family. As to quaternary structure, F-type ATPases have 2 components, CF(1) - the catalytic core - and CF(0) - the membrane proton channel. CF(1) has five subunits: alpha(3), beta(3), gamma(1), delta(1), epsilon(1). CF(0) has four main subunits: a, b, b' and c.

The protein localises to the plastid. Its subcellular location is the chloroplast thylakoid membrane. The catalysed reaction is ATP + H2O + 4 H(+)(in) = ADP + phosphate + 5 H(+)(out). Its function is as follows. Produces ATP from ADP in the presence of a proton gradient across the membrane. The alpha chain is a regulatory subunit. This is ATP synthase subunit alpha, chloroplastic from Nymphaea alba (White water-lily).